The chain runs to 206 residues: Endoplasmic reticulum transmembrane protein YET-like (206 aa).

Residues 1 to 2 lie on the Lumenal side of the membrane; the sequence is ME. A helical membrane pass occupies residues 3–23; that stretch reads FLMTLVFLVLLVEIVFCTFFM. At 24–46 the chain is on the cytoplasmic side; that stretch reads LPVSMHLRKNVYNKLDKLFGGQN. A helical transmembrane segment spans residues 47–67; sequence AKIFLKVLALLVIIVFCDSIV. Residues 68-101 are Lumenal-facing; the sequence is NSYNINKKLHTPELTGAKFDRQNEYTRMFRYQRN. Residues 102–122 form a helical membrane-spanning segment; sequence SYICGFCLYLFFLIYRSQGII. The Cytoplasmic portion of the chain corresponds to 123–206; that stretch reads SQLSNVEASK…KKPKTQKKDD (84 aa). Residues 140 to 198 adopt a coiled-coil conformation; sequence KNNLNTVETLLSENEKLKTEIKDLKKMEKEHKAMKSQAENTTKEYLKLQEEYNQLLGKK. The short motif at 203–206 is the Di-lysine motif element; that stretch reads KKDD.

It belongs to the BCAP29/BCAP31 family.

Its subcellular location is the endoplasmic reticulum membrane. Functionally, may play a role in anterograde transport of membrane proteins from the endoplasmic reticulum to the Golgi. The protein is Endoplasmic reticulum transmembrane protein YET-like of Dictyostelium discoideum (Social amoeba).